We begin with the raw amino-acid sequence, 464 residues long: ATP synthase subunit beta (464 aa).

152–159 is an ATP binding site; sequence GGAGVGKT.

This sequence belongs to the ATPase alpha/beta chains family. In terms of assembly, F-type ATPases have 2 components, CF(1) - the catalytic core - and CF(0) - the membrane proton channel. CF(1) has five subunits: alpha(3), beta(3), gamma(1), delta(1), epsilon(1). CF(0) has three main subunits: a(1), b(2) and c(9-12). The alpha and beta chains form an alternating ring which encloses part of the gamma chain. CF(1) is attached to CF(0) by a central stalk formed by the gamma and epsilon chains, while a peripheral stalk is formed by the delta and b chains.

Its subcellular location is the cell membrane. It catalyses the reaction ATP + H2O + 4 H(+)(in) = ADP + phosphate + 5 H(+)(out). In terms of biological role, produces ATP from ADP in the presence of a proton gradient across the membrane. The catalytic sites are hosted primarily by the beta subunits. The polypeptide is ATP synthase subunit beta (Ureaplasma parvum serovar 3 (strain ATCC 27815 / 27 / NCTC 11736)).